Here is a 1315-residue protein sequence, read N- to C-terminus: Claspin (1315 aa).

2 disordered regions span residues 22 to 276 (EAAD…AARL) and 345 to 474 (PADA…EQKT). Residues Ser-26, Ser-42, Ser-46, Ser-53, Ser-65, and Ser-67 each carry the phosphoserine modification. A compositionally biased stretch (acidic residues) spans 65 to 74 (SDSEAEDRDD). Positions 91–101 (NLHSGKSQSRS) are enriched in polar residues. The segment covering 108–118 (DSDESDMEETP) has biased composition (acidic residues). Residues Ser-109, Ser-112, and Ser-119 each carry the phosphoserine modification. Over residues 119–128 (SQESPETQEA) the composition is skewed to polar residues. 2 stretches are compositionally biased toward basic and acidic residues: residues 153–178 (LLRE…MEKI) and 186–197 (TRCEESDADRPL). A coiled-coil region spans residues 159 to 187 (EGKAKSKRRLEKEERTMEKIRRLKKKETR). Residues 205 to 228 (EDSDLFETGLEEENDSALEDEESL) are compositionally biased toward acidic residues. At Ser-220 the chain carries Phosphoserine. A compositionally biased stretch (basic residues) spans 235 to 245 (VKNKVKNRKKK). The residue at position 255 (Ser-255) is a Phosphoserine. Composition is skewed to basic and acidic residues over residues 391 to 415 (ACGK…DDRP) and 455 to 470 (EELK…EGMP). Phosphoserine is present on Ser-522. Residues 599-626 (EKLQMLKAKLQEAMKLRRLEERQKRQAL) are a coiled coil. Residues 625–691 (ALFKLDNEDG…SSDIGKSVAL (67 aa)) form a disordered region. Positions 632-657 (EDGFEEEEEEEEMTDESEEDGEEETT) are enriched in acidic residues. Over residues 669-679 (KDEKETDKENT) the composition is skewed to basic and acidic residues. Residues Ser-698, Ser-701, Ser-709, Ser-722, and Ser-740 each carry the phosphoserine modification. The disordered stretch occupies residues 713–750 (MGYFPTEEKSETDEYLAKQSDKLDEDDSSSLLTKESSH). Low complexity predominate over residues 741–750 (SSLLTKESSH). Residues Ser-785, Ser-787, Ser-810, Ser-816, and Ser-823 each carry the phosphoserine modification. Residue Lys-868 is modified to N6-acetyllysine. 2 CKB motif repeats span residues 887–896 (ELLDLCTGQF) and 917–926 (ELLNLCSGKF). Residue Thr-893 is modified to Phosphothreonine; by CHEK1. Disordered stretches follow at residues 924-1002 (GKFP…NDEE) and 1032-1052 (EDEA…DGEE). Ser-932 carries the phosphoserine modification. The stretch at 954–963 (EALALCSGSF) is one CKB motif 3 repeat. Positions 966–1063 (DREEEGEEEE…DEYEEDVIDE (98 aa)) are acidic patch. 3 stretches are compositionally biased toward acidic residues: residues 967-977 (REEEGEEEEFG), 990-1002 (SDED…NDEE), and 1043-1052 (GSEDEYDGEE). 3 positions are modified to phosphoserine: Ser-990, Ser-996, and Ser-998. Residues 1001–1036 (EELALDLEDDEEELLKQSEKMKRQMRLKKYLEDEAE) adopt a coiled-coil conformation. A phosphoserine mark is found at Ser-1133 and Ser-1265. Residues 1264 to 1315 (LSPTKAEAAKDSSKPQVRRRGLSSMMSPSPKRLKTNGSSPGPKRSIFRYLES) are disordered.

It belongs to the claspin family. In terms of assembly, interacts (phosphorylation-dependent) with CHEK1; regulates CLSPN function in checkpoint for DNA damage and replication. Interacts with ATR and RAD9A and these interactions are slightly reduced during checkpoint activation. Interacts with BRCA1 and this interaction increases during checkpoint activation. Interacts with TIMELESS; the interaction is required for leading-strand replication. Associates with the MCM2-7 complex and other replisome factors. Interacts (via the acidic patch) with CDC7; the interaction is required for phosphorylation of MCM proteins and CLASPIN by CDC7. Interacts with PCNA. Interacts with FZR1. Phosphorylated. Undergoes ATR-dependent phosphorylation by CHEK1 during activation of DNA replication or damage checkpoints. Phosphorylation by CSNK1G1/CK1 promotes CHEK1 binding. Phosphorylated by CDC7 during DNA replication, phosphorylation inhibits interaction between the acidic patch and N-terminal segments leading to increased binding to DNA and PCNA. Post-translationally, ubiquitinated by the anaphase promoting complex/cyclosome (APC/C) during G1 phase, leading to its degradation by the proteasome. Ubiquitination is mediated via its interaction with FZR1/CDH1. Following DNA damage, it is deubiquitinated by USP28 in G2 phase, preventing its degradation. In terms of processing, proteolytically cleaved by caspase-7 (CASP7) in response to apoptosis, leading to its inactivation.

It localises to the nucleus. Required for checkpoint mediated cell cycle arrest in response to inhibition of DNA replication or to DNA damage induced by both ionizing and UV irradiation. Adapter protein which binds to BRCA1 and the checkpoint kinase CHEK1 and facilitates the ATR-dependent phosphorylation of both proteins. Also required to maintain normal rates of replication fork progression during unperturbed DNA replication. Binds directly to DNA, with particular affinity for branched or forked molecules and interacts with multiple protein components of the replisome such as the MCM2-7 complex and TIMELESS. Important for initiation of DNA replication, recruits kinase CDC7 to phosphorylate MCM2-7 components. The chain is Claspin (Clspn) from Mus musculus (Mouse).